The primary structure comprises 431 residues: 4-hydroxy-3-methylbut-2-en-1-yl diphosphate synthase (flavodoxin) (431 aa).

The segment covering 1 to 12 (MNKLENPLRDDV) has biased composition (basic and acidic residues). A disordered region spans residues 1-20 (MNKLENPLRDDVAGPAPRHQ). Residues Cys-310, Cys-313, Cys-356, and Glu-363 each coordinate [4Fe-4S] cluster.

It belongs to the IspG family. [4Fe-4S] cluster serves as cofactor.

The enzyme catalyses (2E)-4-hydroxy-3-methylbut-2-enyl diphosphate + oxidized [flavodoxin] + H2O + 2 H(+) = 2-C-methyl-D-erythritol 2,4-cyclic diphosphate + reduced [flavodoxin]. It functions in the pathway isoprenoid biosynthesis; isopentenyl diphosphate biosynthesis via DXP pathway; isopentenyl diphosphate from 1-deoxy-D-xylulose 5-phosphate: step 5/6. In terms of biological role, converts 2C-methyl-D-erythritol 2,4-cyclodiphosphate (ME-2,4cPP) into 1-hydroxy-2-methyl-2-(E)-butenyl 4-diphosphate. The protein is 4-hydroxy-3-methylbut-2-en-1-yl diphosphate synthase (flavodoxin) of Rhodopseudomonas palustris (strain TIE-1).